Here is a 589-residue protein sequence, read N- to C-terminus: Protein FAM117B (589 aa).

Positions 1–310 are disordered; sequence MSQRVRRNGS…RDKERQSPFH (310 aa). Position 10 is a phosphoserine (S10). Residues 16–29 are compositionally biased toward gly residues; the sequence is SLGGGAVATAGGPG. Residues 45–56 show a composition bias toward low complexity; that stretch reads QQQQQQHGSPTR. Residues 57-85 are compositionally biased toward gly residues; sequence SGGGGGGNNNGGCCGGASGPAGGGGGGGP. S106 is modified (phosphoserine). Residues 108-136 are compositionally biased toward low complexity; that stretch reads TVATQTGASATSTRGTSPTRSAAPGARGS. Residues 137–146 are compositionally biased toward pro residues; sequence PPRPPPPPPL. Low complexity-rich tracts occupy residues 147-158 and 207-220; these read LGTVSSPSSSPT and PSSSPSSIIRRTSS. S210, S219, S220, and S273 each carry phosphoserine. Residues 292–302 show a composition bias toward basic residues; it reads RSKHSSRHHRD. A phosphoserine mark is found at S345 and S391. 2 disordered regions span residues 370-464 and 556-589; these read QDIP…NNSY and STNTEQDRVSRGTSTVMPSASLLPPPEPIEEAEG. Polar residues predominate over residues 384–397; it reads QRSSSTRSIDTQTP. Residues 404-417 are compositionally biased toward low complexity; it reads SNNSSRSQSVSPTS. S449 and S457 each carry phosphoserine.

The chain is Protein FAM117B (FAM117B) from Homo sapiens (Human).